The sequence spans 384 residues: Putative pectate lyase 2 (384 aa).

A signal peptide spans 1–23 (MASLFLTIISLLFAAFSSSVVEA). Residues aspartate 182, aspartate 206, and aspartate 210 each contribute to the Ca(2+) site. Arginine 262 is a catalytic residue.

The protein belongs to the polysaccharide lyase 1 family. Ca(2+) is required as a cofactor.

It catalyses the reaction Eliminative cleavage of (1-&gt;4)-alpha-D-galacturonan to give oligosaccharides with 4-deoxy-alpha-D-galact-4-enuronosyl groups at their non-reducing ends.. Its pathway is glycan metabolism; pectin degradation; 2-dehydro-3-deoxy-D-gluconate from pectin: step 2/5. In Arabidopsis thaliana (Mouse-ear cress), this protein is Putative pectate lyase 2.